The primary structure comprises 952 residues: UvrABC system protein A (952 aa).

Position 38–45 (38–45) interacts with ATP; it reads GLSGSGKS. The C4-type zinc-finger motif lies at 258–285; the sequence is CNECGFSIPELEPRFFSFNSPVGACKSC. ABC transporter domains lie at 315 to 596 and 616 to 945; these read FRSV…KKSI and GNGK…LFLE. Residue 648–655 coordinates ATP; that stretch reads GVSGSGKS. The C4-type zinc-finger motif lies at 747–773; sequence CENCSGDGLIKIEMHFLPDVFVKCESC.

This sequence belongs to the ABC transporter superfamily. UvrA family. Forms a heterotetramer with UvrB during the search for lesions.

The protein localises to the cytoplasm. Functionally, the UvrABC repair system catalyzes the recognition and processing of DNA lesions. UvrA is an ATPase and a DNA-binding protein. A damage recognition complex composed of 2 UvrA and 2 UvrB subunits scans DNA for abnormalities. When the presence of a lesion has been verified by UvrB, the UvrA molecules dissociate. In Malacoplasma penetrans (strain HF-2) (Mycoplasma penetrans), this protein is UvrABC system protein A.